A 287-amino-acid chain; its full sequence is Uroplakin-3a (287 aa).

An N-terminal signal peptide occupies residues M1–A18. The Lumenal segment spans residues V19–G207. 3 N-linked (GlcNAc...) asparagine glycosylation sites follow: N74, N139, and N170. A helical membrane pass occupies residues M208–V235. The Cytoplasmic portion of the chain corresponds to D236–D287. The interval G242–D287 is disordered. Polar residues predominate over residues A261 to N270.

It belongs to the uroplakin-3 family. As to quaternary structure, heterodimer with uroplakin-1B (UPK1B). As to expression, expressed in ureter.

The protein localises to the endoplasmic reticulum membrane. Its function is as follows. Component of the asymmetric unit membrane (AUM); a highly specialized biomembrane elaborated by terminally differentiated urothelial cells. May play an important role in AUM-cytoskeleton interaction in terminally differentiated urothelial cells. It also contributes to the formation of urothelial glycocalyx which may play an important role in preventing bacterial adherence. This chain is Uroplakin-3a (UPK3A), found in Homo sapiens (Human).